The sequence spans 133 residues: Profilin Sal k 4.0301 (133 aa).

A disulfide bridge connects residues C95 and C117.

Belongs to the profilin family. Occurs in many kinds of cells as a complex with monomeric actin in a 1:1 ratio. As to expression, expressed in pollen (at protein and mRNA level).

The protein localises to the cytoplasm. It localises to the cytoskeleton. Binds to actin and affects the structure of the cytoskeleton. At high concentrations, profilin prevents the polymerization of actin, whereas it enhances it at low concentrations. The sequence is that of Profilin Sal k 4.0301 from Kali turgidum (Prickly saltwort).